The sequence spans 786 residues: Endonuclease MutS2 (786 aa).

Position 335-342 (335-342) interacts with ATP; the sequence is GPNTGGKT. Residues 711–786 enclose the Smr domain; that stretch reads LDLRGERFEN…GLGVTVVELK (76 aa).

This sequence belongs to the DNA mismatch repair MutS family. MutS2 subfamily. Homodimer. Binds to stalled ribosomes, contacting rRNA.

In terms of biological role, endonuclease that is involved in the suppression of homologous recombination and thus may have a key role in the control of bacterial genetic diversity. Functionally, acts as a ribosome collision sensor, splitting the ribosome into its 2 subunits. Detects stalled/collided 70S ribosomes which it binds and splits by an ATP-hydrolysis driven conformational change. Acts upstream of the ribosome quality control system (RQC), a ribosome-associated complex that mediates the extraction of incompletely synthesized nascent chains from stalled ribosomes and their subsequent degradation. Probably generates substrates for RQC. The chain is Endonuclease MutS2 from Bacillus cereus (strain Q1).